A 145-amino-acid polypeptide reads, in one-letter code: CASP-like protein SELMODRAFT_406854 (145 aa).

Residues 1–31 (MGVASQSSVANEAGAAPEASIQQTLRGFSSP) are Cytoplasmic-facing. A helical transmembrane segment spans residues 32–52 (TSLLLRIATAVLCTLTLAFLV). At 53–75 (TSKERKEIASIDIVAIWSNSKAL) the chain is on the extracellular side. A helical transmembrane segment spans residues 76–96 (IFLAVVSGICLGYSLLHAAVF). The Cytoplasmic segment spans residues 97 to 112 (LVMLSGNRKPLARKKA). A helical transmembrane segment spans residues 113–133 (LDWMVFLADQVFFKIFCWFSI). Residues 134–145 (RVSSRRSKAGFV) are Extracellular-facing.

The protein belongs to the Casparian strip membrane proteins (CASP) family. In terms of assembly, homodimer and heterodimers.

The protein localises to the cell membrane. The polypeptide is CASP-like protein SELMODRAFT_406854 (Selaginella moellendorffii (Spikemoss)).